The chain runs to 208 residues: MFTGIVNGIARVVSINKKKNFHTYTVNFSSILLKNLKIGDSVAHNGCCLTVKYINCPHVVFDIMKITIANTNLGVLNIGDYVNIERSLKYGDEMGGHIISGHIMNTGEISKISKLDKNYILWCKVKDLSLMKYIFYKGFIAIDGISLTINNIIKNEFCVSIIPETLSSTTIGFKKIGQLVNIEIDFYTQIIVDTTKRLIKKDISTLFK.

Lumazine-binding repeat units lie at residues 1–97 (MFTG…MGGH) and 98–195 (IISG…VDTT). 2,4-dihydroxypteridine-binding positions include 4–6 (GIV), 48–50 (CLT), 62–67 (DIMKIT), 101–103 (GHI), K137, 146–148 (SLT), and 160–165 (SIIPET).

As to quaternary structure, homotrimer.

It carries out the reaction 2 6,7-dimethyl-8-(1-D-ribityl)lumazine + H(+) = 5-amino-6-(D-ribitylamino)uracil + riboflavin. The protein operates within cofactor biosynthesis; riboflavin biosynthesis; riboflavin from 2-hydroxy-3-oxobutyl phosphate and 5-amino-6-(D-ribitylamino)uracil: step 2/2. Functionally, catalyzes the dismutation of two molecules of 6,7-dimethyl-8-ribityllumazine, resulting in the formation of riboflavin and 5-amino-6-(D-ribitylamino)uracil. This is Riboflavin synthase (ribE) from Buchnera aphidicola subsp. Schizaphis graminum (strain Sg).